A 74-amino-acid chain; its full sequence is ATP synthase subunit 9, mitochondrial (74 aa).

The next 2 membrane-spanning stretches (helical) occupy residues 16-36 and 50-70; these read GLIG…LGVA and ILGF…AFLL.

It belongs to the ATPase C chain family. In terms of assembly, F-type ATPases have 2 components, CF(1) - the catalytic core - and CF(0) - the membrane proton channel. CF(1) has five subunits: alpha(3), beta(3), gamma(1), delta(1), epsilon(1). CF(0) has three main subunits: a, b and c.

It is found in the mitochondrion membrane. Mitochondrial membrane ATP synthase (F(1)F(0) ATP synthase or Complex V) produces ATP from ADP in the presence of a proton gradient across the membrane which is generated by electron transport complexes of the respiratory chain. F-type ATPases consist of two structural domains, F(1) - containing the extramembraneous catalytic core and F(0) - containing the membrane proton channel, linked together by a central stalk and a peripheral stalk. During catalysis, ATP synthesis in the catalytic domain of F(1) is coupled via a rotary mechanism of the central stalk subunits to proton translocation. Part of the complex F(0) domain. A homomeric c-ring of probably 10 subunits is part of the complex rotary element. The chain is ATP synthase subunit 9, mitochondrial (ATP9) from Trichophyton rubrum (Athlete's foot fungus).